The chain runs to 169 residues: MLESVLHALHLNETFLAMLISFLILVFILQQVAFKPILKALDERRQKVEESISRAENDLEEANRMRAENAAELAKARQEAHDLIARATKVGEEKAQEIVAAAQAEANRLKEKAVADIQREKEKALEELRSHVVNLSILAAEKVIRKNLDEPTQRQLVDEVINEVGKLPC.

Residues 14–34 (TFLAMLISFLILVFILQQVAF) form a helical membrane-spanning segment.

Belongs to the ATPase B chain family. F-type ATPases have 2 components, F(1) - the catalytic core - and F(0) - the membrane proton channel. F(1) has five subunits: alpha(3), beta(3), gamma(1), delta(1), epsilon(1). F(0) has four main subunits: a(1), b(2) and c(10-14). The alpha and beta chains form an alternating ring which encloses part of the gamma chain. F(1) is attached to F(0) by a central stalk formed by the gamma and epsilon chains, while a peripheral stalk is formed by the delta and b chains.

The protein resides in the cell membrane. In terms of biological role, f(1)F(0) ATP synthase produces ATP from ADP in the presence of a proton or sodium gradient. F-type ATPases consist of two structural domains, F(1) containing the extramembraneous catalytic core and F(0) containing the membrane proton channel, linked together by a central stalk and a peripheral stalk. During catalysis, ATP synthesis in the catalytic domain of F(1) is coupled via a rotary mechanism of the central stalk subunits to proton translocation. Its function is as follows. Component of the F(0) channel, it forms part of the peripheral stalk, linking F(1) to F(0). The protein is ATP synthase subunit b of Heliobacterium modesticaldum (strain ATCC 51547 / Ice1).